The following is a 119-amino-acid chain: Large ribosomal subunit protein bL20 (119 aa).

This sequence belongs to the bacterial ribosomal protein bL20 family.

Binds directly to 23S ribosomal RNA and is necessary for the in vitro assembly process of the 50S ribosomal subunit. It is not involved in the protein synthesizing functions of that subunit. The chain is Large ribosomal subunit protein bL20 from Buchnera aphidicola subsp. Cinara cedri (strain Cc).